Reading from the N-terminus, the 342-residue chain is tRNA-specific 2-thiouridylase MnmA (342 aa).

Residues leucine 6–serine 13 and leucine 32 each bind ATP. The Nucleophile role is filled by cysteine 92. Cysteine 92 and cysteine 191 are joined by a disulfide. Glycine 116 serves as a coordination point for ATP. The segment at lysine 138 to glutamine 140 is interaction with tRNA. Catalysis depends on cysteine 191, which acts as the Cysteine persulfide intermediate. The interval arginine 293–tyrosine 294 is interaction with tRNA.

This sequence belongs to the MnmA/TRMU family.

The protein resides in the cytoplasm. The enzyme catalyses S-sulfanyl-L-cysteinyl-[protein] + uridine(34) in tRNA + AH2 + ATP = 2-thiouridine(34) in tRNA + L-cysteinyl-[protein] + A + AMP + diphosphate + H(+). Functionally, catalyzes the 2-thiolation of uridine at the wobble position (U34) of tRNA, leading to the formation of s(2)U34. This Helicobacter pylori (strain HPAG1) protein is tRNA-specific 2-thiouridylase MnmA.